Reading from the N-terminus, the 271-residue chain is Glutamate racemase (271 aa).

Substrate contacts are provided by residues 10 to 11 and 42 to 43; these read DS and YG. Cysteine 74 functions as the Proton donor/acceptor in the catalytic mechanism. A substrate-binding site is contributed by 75 to 76; sequence NT. The Proton donor/acceptor role is filled by cysteine 189. Position 190–191 (190–191) interacts with substrate; sequence TH.

It belongs to the aspartate/glutamate racemases family.

It catalyses the reaction L-glutamate = D-glutamate. The protein operates within cell wall biogenesis; peptidoglycan biosynthesis. Functionally, provides the (R)-glutamate required for cell wall biosynthesis. The protein is Glutamate racemase of Bartonella bacilliformis (strain ATCC 35685 / KC583 / Herrer 020/F12,63).